We begin with the raw amino-acid sequence, 393 residues long: MAKEAYKRDKPHVNIGTIGHVDHGKTTLTAAITSVLAKAGNAEMREFGDIDKAPEERERGITISTAHVEYQTEKRHYAHIDCPGHADYIKNMITGAAQMDGAILVVAGTDGPMPQTREHILLARQVNVPALVVFLNKVDIADPELLELVELELRELLTEYDFPGDDIPIIKGSALKALEGDAEAEKAIMELMDAVDDYIPEPVRDVDKPFLMPVEDVFSISGRGTVGTGRIERGVVKINEEVELVGIKPTKKTVVTGIEMFQKILDQGQAGDNAGLLFRGVGKDEIERGMVVAKPGTITPHTKFKAEVYILKKEEGGRHTPFFNNYRPQFYFRTTDVTGAVTLPEGVEMVMPGDNLSIEVELIVPIAMDENLRFAIREGGRTVGAGTVTQIIE.

One can recognise a tr-type G domain in the interval 10–203 (KPHVNIGTIG…AVDDYIPEPV (194 aa)). Residues 19 to 26 (GHVDHGKT) are G1. 19-26 (GHVDHGKT) contributes to the GTP binding site. Residue Thr26 coordinates Mg(2+). Residues 60–64 (GITIS) are G2. Residues 81–84 (DCPG) are G3. GTP-binding positions include 81–85 (DCPGH) and 136–139 (NKVD). A G4 region spans residues 136–139 (NKVD). Residues 173 to 175 (SAL) are G5.

Belongs to the TRAFAC class translation factor GTPase superfamily. Classic translation factor GTPase family. EF-Tu/EF-1A subfamily. In terms of assembly, monomer.

The protein localises to the cytoplasm. It carries out the reaction GTP + H2O = GDP + phosphate + H(+). Its function is as follows. GTP hydrolase that promotes the GTP-dependent binding of aminoacyl-tRNA to the A-site of ribosomes during protein biosynthesis. The polypeptide is Elongation factor Tu (Chlorobium phaeobacteroides (strain BS1)).